We begin with the raw amino-acid sequence, 69 residues long: Ribosome modulation factor (69 aa).

It belongs to the ribosome modulation factor family.

The protein resides in the cytoplasm. Its function is as follows. During stationary phase, converts 70S ribosomes to an inactive dimeric form (100S ribosomes). The chain is Ribosome modulation factor from Marinomonas mediterranea (strain ATCC 700492 / JCM 21426 / NBRC 103028 / MMB-1).